A 433-amino-acid chain; its full sequence is Sulfhydrylase FUB7 (433 aa).

Lys211 carries the post-translational modification N6-(pyridoxal phosphate)lysine.

Belongs to the trans-sulfuration enzymes family. The cofactor is pyridoxal 5'-phosphate.

The protein operates within mycotoxin biosynthesis. Sulfhydrylase; part of the gene cluster that mediates the biosynthesis of fusaric acid, a mycotoxin with low to moderate toxicity to animals and humans, but with high phytotoxic properties. L-aspartate is suggested as fusaric acid amino acid precursor that is activated and further processed to O-acetyl-L-homoserine by cluster enzymes aspartate kinase FUB3 and homoserine O-acetyltransferase FUB5, as well as enzymes of the primary metabolism. The polyketide synthase (PKS) FUB1 generates the triketide trans-2-hexenal which is presumptively released by the hydrolase FUB4 and linked to the NRPS-bound amino acid precursor by NAD(P)-dependent dehydrogenase FUB6. FUB1, FUB4, and the non-canonical NRPS Fub8 may form an enzyme complex. Further processing of the NRPS-bound intermediate might be carried out by FUB6 and the O-acetylhomoserine FUB7, enabling a spontaneous electrocyclization to close the carbon backbone of fusaric acid. Dihydrofusaric acid is likely to be released via reduction by the thioester reductase (TR) domain of FUB8 whereupon the final oxidation to fusaric acid may (also) be performed by the FMN-dependent dehydrogenase FUB9. The protein is Sulfhydrylase FUB7 of Gibberella moniliformis (strain M3125 / FGSC 7600) (Maize ear and stalk rot fungus).